We begin with the raw amino-acid sequence, 217 residues long: Nucleoside diphosphate kinase homolog 5 (217 aa).

Residues 18-151 (ERTLALIKPD…REIRFMFPHS (134 aa)) are NDK.

It belongs to the NDK family.

It is found in the cell projection. The protein resides in the cilium. In terms of biological role, functions as part of axonemal radial spoke complexes that play an important part in the motility of sperm and cilia. Does not seem to have nucleoside diphosphate kinase (NDPK) activity. Exhibits a 3'-5' exonuclease activity with a preference for single-stranded DNA, suggesting roles in DNA proofreading and repair. This Danio rerio (Zebrafish) protein is Nucleoside diphosphate kinase homolog 5 (nme5).